The primary structure comprises 247 residues: ATP synthase subunit a, chloroplastic (247 aa).

The next 5 helical transmembrane spans lie at 38–58, 95–115, 134–154, 199–219, and 220–240; these read QVLITSWVVIAILLGSATLAV, VPFIGTMFLFIFVSNWSGALL, INTTVALALLTSVAYFYAGLT, LVVVVLVSLVPSVVPIPVMFL, and GLFTSGIQALIFATLAAAYIG.

Belongs to the ATPase A chain family. In terms of assembly, F-type ATPases have 2 components, CF(1) - the catalytic core - and CF(0) - the membrane proton channel. CF(1) has five subunits: alpha(3), beta(3), gamma(1), delta(1), epsilon(1). CF(0) has four main subunits: a, b, b' and c.

Its subcellular location is the plastid. It localises to the chloroplast thylakoid membrane. In terms of biological role, key component of the proton channel; it plays a direct role in the translocation of protons across the membrane. The chain is ATP synthase subunit a, chloroplastic from Guizotia abyssinica (Niger).